Reading from the N-terminus, the 549-residue chain is Cytoplasmic trehalase (549 aa).

Residues Arg168, 175–176, Asn212, 221–223, 292–294, and Gly324 each bind substrate; these read WD, RSQ, and RDE. Residues Asp326 and Glu509 each act as proton donor/acceptor in the active site. Glu525 provides a ligand contact to substrate.

Belongs to the glycosyl hydrolase 37 family. In terms of assembly, monomer.

It is found in the cytoplasm. The enzyme catalyses alpha,alpha-trehalose + H2O = alpha-D-glucose + beta-D-glucose. The protein operates within glycan degradation; trehalose degradation; D-glucose from alpha,alpha-trehalose: step 1/1. Hydrolyzes trehalose to glucose. Could be involved, in cells returning to low osmolarity conditions, in the utilization of the accumulated cytoplasmic trehalose, which was synthesized in response to high osmolarity. The chain is Cytoplasmic trehalase from Salmonella schwarzengrund (strain CVM19633).